Reading from the N-terminus, the 137-residue chain is MRKLIYIIVGIAGILGALSRYYLGLTIHEFWHHTFPLATLLINLVGCFLLAWLTTYIAQRNILPAEIITGIGTGFIGSFTTFSTFSVETIQLINHSEWSIAFLYVSCSILGGLIMSGLGYTLGDFLIKKHLTEGDHL.

A run of 4 helical transmembrane segments spans residues 4–24 (LIYIIVGIAGILGALSRYYLG), 37–57 (LATLLINLVGCFLLAWLTTYI), 62–82 (ILPAEIITGIGTGFIGSFTTF), and 100–120 (IAFLYVSCSILGGLIMSGLGY). Na(+) is bound by residues glycine 77 and threonine 80.

Belongs to the fluoride channel Fluc/FEX (TC 1.A.43) family.

The protein localises to the cell membrane. It catalyses the reaction fluoride(in) = fluoride(out). With respect to regulation, na(+) is not transported, but it plays an essential structural role and its presence is essential for fluoride channel function. Functionally, fluoride-specific ion channel. Important for reducing fluoride concentration in the cell, thus reducing its toxicity. The polypeptide is Fluoride-specific ion channel FluC 1 (Bacillus cereus (strain ATCC 10987 / NRS 248)).